Here is a 466-residue protein sequence, read N- to C-terminus: Ribulose bisphosphate carboxylase large chain (466 aa).

Lys5 bears the N6,N6,N6-trimethyllysine mark. Substrate contacts are provided by Asn114 and Thr164. The Proton acceptor role is filled by Lys166. Residue Lys168 coordinates substrate. Mg(2+) is bound by residues Lys192, Asp194, and Glu195. Lys192 carries the post-translational modification N6-carboxylysine. Residue His285 is the Proton acceptor of the active site. The substrate site is built by Arg286, His318, and Ser370.

This sequence belongs to the RuBisCO large chain family. Type I subfamily. Heterohexadecamer of 8 large chains and 8 small chains; disulfide-linked. The disulfide link is formed within the large subunit homodimers. Requires Mg(2+) as cofactor. Post-translationally, the disulfide bond which can form in the large chain dimeric partners within the hexadecamer appears to be associated with oxidative stress and protein turnover.

The protein localises to the plastid. The protein resides in the chloroplast. The catalysed reaction is 2 (2R)-3-phosphoglycerate + 2 H(+) = D-ribulose 1,5-bisphosphate + CO2 + H2O. It carries out the reaction D-ribulose 1,5-bisphosphate + O2 = 2-phosphoglycolate + (2R)-3-phosphoglycerate + 2 H(+). In terms of biological role, ruBisCO catalyzes two reactions: the carboxylation of D-ribulose 1,5-bisphosphate, the primary event in carbon dioxide fixation, as well as the oxidative fragmentation of the pentose substrate in the photorespiration process. Both reactions occur simultaneously and in competition at the same active site. In Vitis aestivalis (Grape), this protein is Ribulose bisphosphate carboxylase large chain.